The following is a 184-amino-acid chain: GMP synthase [glutamine-hydrolyzing] subunit A (184 aa).

The Glutamine amidotransferase type-1 domain maps to 3 to 184; sequence PLYVVNNHGQ…FENFDGICSE (182 aa). The Nucleophile role is filled by Cys75. Residues His162 and Glu164 contribute to the active site.

Heterodimer composed of a glutamine amidotransferase subunit (A) and a GMP-binding subunit (B).

The enzyme catalyses XMP + L-glutamine + ATP + H2O = GMP + L-glutamate + AMP + diphosphate + 2 H(+). It functions in the pathway purine metabolism; GMP biosynthesis; GMP from XMP (L-Gln route): step 1/1. Catalyzes the synthesis of GMP from XMP. This Methanoculleus marisnigri (strain ATCC 35101 / DSM 1498 / JR1) protein is GMP synthase [glutamine-hydrolyzing] subunit A.